The sequence spans 266 residues: Auxin-responsive protein IAA21 (266 aa).

Positions 24 to 28 (LRLGL) match the EAR-like (transcriptional repression) motif. The interval 27-50 (GLPGTAEEAESEGGGGGGTDAAPL) is disordered. Residues 146-248 (CLYVKVSMDG…SCRRLRIMKG (103 aa)) enclose the PB1 domain.

This sequence belongs to the Aux/IAA family. In terms of assembly, homodimers and heterodimers. In terms of tissue distribution, highly expressed in flowers. Expressed in roots and seedlings.

The protein resides in the nucleus. In terms of biological role, aux/IAA proteins are short-lived transcriptional factors that function as repressors of early auxin response genes at low auxin concentrations. This Oryza sativa subsp. japonica (Rice) protein is Auxin-responsive protein IAA21 (IAA21).